We begin with the raw amino-acid sequence, 88 residues long: Beta-insect excitatory toxin LqhIT1d (88 aa).

An N-terminal signal peptide occupies residues 1–18 (MKFFLLFLVVLPIMGVLG). The LCN-type CS-alpha/beta domain maps to 20–83 (KNGFAVDSNG…ISDTRKKLCD (64 aa)). Disulfide bonds link cysteine 34-cysteine 55, cysteine 40-cysteine 60, cysteine 44-cysteine 62, and cysteine 56-cysteine 82.

Belongs to the long (4 C-C) scorpion toxin superfamily. Sodium channel inhibitor family. Beta subfamily. In terms of tissue distribution, expressed by the venom gland.

The protein resides in the secreted. Excitatory insect toxins induce a spastic paralysis. They bind voltage-independently at site-4 of sodium channels (Nav) and shift the voltage of activation toward more negative potentials thereby affecting sodium channel activation and promoting spontaneous and repetitive firing. This chain is Beta-insect excitatory toxin LqhIT1d, found in Leiurus hebraeus (Hebrew deathstalker scorpion).